A 417-amino-acid chain; its full sequence is Serine hydroxymethyltransferase (417 aa).

(6S)-5,6,7,8-tetrahydrofolate is bound by residues leucine 120 and 124 to 126 (GHL). Lysine 229 is modified (N6-(pyridoxal phosphate)lysine).

This sequence belongs to the SHMT family. As to quaternary structure, homodimer. Pyridoxal 5'-phosphate serves as cofactor.

The protein localises to the cytoplasm. The enzyme catalyses (6R)-5,10-methylene-5,6,7,8-tetrahydrofolate + glycine + H2O = (6S)-5,6,7,8-tetrahydrofolate + L-serine. Its pathway is one-carbon metabolism; tetrahydrofolate interconversion. It participates in amino-acid biosynthesis; glycine biosynthesis; glycine from L-serine: step 1/1. Functionally, catalyzes the reversible interconversion of serine and glycine with tetrahydrofolate (THF) serving as the one-carbon carrier. This reaction serves as the major source of one-carbon groups required for the biosynthesis of purines, thymidylate, methionine, and other important biomolecules. Also exhibits THF-independent aldolase activity toward beta-hydroxyamino acids, producing glycine and aldehydes, via a retro-aldol mechanism. This Anaeromyxobacter dehalogenans (strain 2CP-C) protein is Serine hydroxymethyltransferase.